The following is a 372-amino-acid chain: Lysophosphatidic acid receptor 5 (372 aa).

Over 1–30 the chain is Extracellular; sequence MFANSSANTTSTNSSVLQCPDYRDTHRLHM. 3 N-linked (GlcNAc...) asparagine glycosylation sites follow: N4, N8, and N13. A helical transmembrane segment spans residues 31-51; sequence VVYSLVLATGLPLNALALWVF. The Cytoplasmic segment spans residues 52–59; that stretch reads LRVLRVHS. A helical transmembrane segment spans residues 60-80; the sequence is VVSVYMCNLAASDLLFTLSLP. The Extracellular portion of the chain corresponds to 81–100; sequence LRLSYYAQHHWPFPGFLCQT. An intrachain disulfide couples C98 to C179. The chain crosses the membrane as a helical span at residues 101–121; the sequence is SGAIFQMNMYGSCLFLMLINV. Topologically, residues 122–140 are cytoplasmic; that stretch reads DRYAAIVHPLRLRHLRRPR. A helical membrane pass occupies residues 141–161; sequence VARRLCLGVWALILLFAVPAA. Over 162–191 the chain is Extracellular; sequence RVHSPSHCTYKNITVRLCFESFSDELWKGR. Residue N173 is glycosylated (N-linked (GlcNAc...) asparagine). Residues 192–212 form a helical membrane-spanning segment; that stretch reads LLPLLLLAEILGFLLPLAAVV. The Cytoplasmic segment spans residues 213-243; that stretch reads YSSGRVFWTLARPDATQSQRRRKTVRLLLAN. A helical membrane pass occupies residues 244-264; it reads LIIFLLCFVPYNSTLAVYGLL. The Extracellular portion of the chain corresponds to 265 to 280; it reads RANLVKNSIQDRDQVR. Residues 281 to 301 traverse the membrane as a helical segment; sequence GVLMIMVLLAGANCVLDPLVY. The Cytoplasmic segment spans residues 302–372; that stretch reads YFSAEGFRNT…PDNCSQDSAL (71 aa).

It belongs to the G-protein coupled receptor 1 family.

Its subcellular location is the cell membrane. Its function is as follows. Receptor for lysophosphatidic acid (LPA), a mediator of diverse cellular activities. This is Lysophosphatidic acid receptor 5 (Lpar5) from Mus musculus (Mouse).